Reading from the N-terminus, the 747-residue chain is Major facilitator superfamily domain-containing protein 6-B (747 aa).

Transmembrane regions (helical) follow at residues L15 to Q35, K75 to V95, T222 to V242, W271 to I291, I306 to H326, V391 to W411, T420 to I440, V453 to Y470, G485 to L507, L520 to A540, and G546 to G566. Polar residues-rich tracts occupy residues N597–D606 and N652–A668. Disordered stretches follow at residues N597–A625 and N652–H747. Residues S675–S685 show a composition bias toward low complexity.

The protein belongs to the major facilitator superfamily. MFSD6 family.

Its subcellular location is the membrane. This is Major facilitator superfamily domain-containing protein 6-B (mfsd6b) from Danio rerio (Zebrafish).